Here is a 359-residue protein sequence, read N- to C-terminus: tRNA-specific 2-thiouridylase MnmA (359 aa).

Residues 7–14 (AMSGGVDS) and methionine 33 each bind ATP. The active-site Nucleophile is the cysteine 101. Cysteines 101 and 198 form a disulfide. Glycine 125 is a binding site for ATP. The segment at 148–150 (KDQ) is interaction with tRNA. The active-site Cysteine persulfide intermediate is the cysteine 198.

Belongs to the MnmA/TRMU family.

The protein localises to the cytoplasm. The catalysed reaction is S-sulfanyl-L-cysteinyl-[protein] + uridine(34) in tRNA + AH2 + ATP = 2-thiouridine(34) in tRNA + L-cysteinyl-[protein] + A + AMP + diphosphate + H(+). Functionally, catalyzes the 2-thiolation of uridine at the wobble position (U34) of tRNA, leading to the formation of s(2)U34. This is tRNA-specific 2-thiouridylase MnmA from Chloroflexus aurantiacus (strain ATCC 29366 / DSM 635 / J-10-fl).